The sequence spans 202 residues: LexA repressor (202 aa).

A DNA-binding region (H-T-H motif) is located at residues Arg-28–Lys-48. Active-site for autocatalytic cleavage activity residues include Ser-119 and Lys-156.

The protein belongs to the peptidase S24 family. Homodimer.

It carries out the reaction Hydrolysis of Ala-|-Gly bond in repressor LexA.. Represses a number of genes involved in the response to DNA damage (SOS response), including recA and lexA. In the presence of single-stranded DNA, RecA interacts with LexA causing an autocatalytic cleavage which disrupts the DNA-binding part of LexA, leading to derepression of the SOS regulon and eventually DNA repair. In Pectobacterium atrosepticum (strain SCRI 1043 / ATCC BAA-672) (Erwinia carotovora subsp. atroseptica), this protein is LexA repressor.